Reading from the N-terminus, the 406-residue chain is Lysine-specific demethylase 8 (406 aa).

The segment covering 143-152 (KAERSEEPFS) has biased composition (basic and acidic residues). The disordered stretch occupies residues 143 to 162 (KAERSEEPFSKKRKHDCKSE). In terms of domain architecture, JmjC spans 270–406 (DQVPELKEDI…LSFSVSFWWS (137 aa)). Fe cation is bound by residues histidine 311 and aspartate 313.

It depends on Fe(2+) as a cofactor.

The protein resides in the nucleus. The catalysed reaction is N(6),N(6)-dimethyl-L-lysyl(36)-[histone H3] + 2 2-oxoglutarate + 2 O2 = L-lysyl(36)-[histone H3] + 2 formaldehyde + 2 succinate + 2 CO2. Histone demethylase required for G2/M phase cell cycle progression. Specifically demethylates dimethylated 'Lys-36' (H3K36me2) of histone H3, an epigenetic repressive mark, thereby acting as a transcription activator. May play a role in the regulation of the circadian clock. The polypeptide is Lysine-specific demethylase 8 (kdm8) (Danio rerio (Zebrafish)).